Consider the following 358-residue polypeptide: Probable tartrate dehydrogenase/decarboxylase TtuC' (358 aa).

Mn(2+) contacts are provided by D222, D246, and D250.

It belongs to the isocitrate and isopropylmalate dehydrogenases family. The cofactor is Mg(2+). It depends on Mn(2+) as a cofactor. K(+) is required as a cofactor.

Its subcellular location is the cytoplasm. It carries out the reaction tartrate + NAD(+) = 2-hydroxy-3-oxosuccinate + NADH + H(+). It catalyses the reaction (2R,3S)-tartrate + NAD(+) = 2-hydroxy-3-oxosuccinate + NADH + H(+). The catalysed reaction is (2R,3R)-tartrate + NAD(+) = 2-hydroxy-3-oxosuccinate + NADH + H(+). The enzyme catalyses (2R,3R)-tartrate + H(+) = (R)-glycerate + CO2. It carries out the reaction (R)-malate + NAD(+) = pyruvate + CO2 + NADH. It participates in carbohydrate acid metabolism; tartrate degradation; 2-hydroxy-3-oxosuccinate from L-tartrate: step 1/1. The protein operates within carbohydrate acid metabolism; tartrate degradation; 2-hydroxy-3-oxosuccinate from meso-tartrate: step 1/1. It functions in the pathway carbohydrate acid metabolism; tartrate degradation; D-glycerate from L-tartrate: step 1/1. Functionally, has multiple catalytic activities. Apart from catalyzing the oxidation of (+)-tartrate to oxaloglycolate, also converts meso-tartrate to D-glycerate and catalyzes the oxidative decarboxylation of D-malate to pyruvate. The polypeptide is Probable tartrate dehydrogenase/decarboxylase TtuC' (ttuC') (Agrobacterium vitis (Rhizobium vitis)).